The sequence spans 153 residues: Endoribonuclease YbeY (153 aa).

Zn(2+) is bound by residues His119, His123, and His129.

It belongs to the endoribonuclease YbeY family. Requires Zn(2+) as cofactor.

Its subcellular location is the cytoplasm. Single strand-specific metallo-endoribonuclease involved in late-stage 70S ribosome quality control and in maturation of the 3' terminus of the 16S rRNA. In Desulforamulus reducens (strain ATCC BAA-1160 / DSM 100696 / MI-1) (Desulfotomaculum reducens), this protein is Endoribonuclease YbeY.